We begin with the raw amino-acid sequence, 142 residues long: Transcriptional regulator MraZ (142 aa).

2 SpoVT-AbrB domains span residues 5–51 (ASSL…PRPE) and 77–120 (AMDV…DKAS).

Belongs to the MraZ family. As to quaternary structure, forms oligomers.

It is found in the cytoplasm. It localises to the nucleoid. In Verminephrobacter eiseniae (strain EF01-2), this protein is Transcriptional regulator MraZ.